The sequence spans 376 residues: MARGPGPLGRPRPDTVAMPKRGKRLKFRAHDACSGRVTVADYANSDPAVVRSGRVKKAVANAVQQEVKSLCGLEASQVPAEEALSGAGEPCDIIDSSDEMDAQEESIHERTVSRKKKSKRHKEELDGAGGEEYPMDIWLLLASYIRPEDIVNFSLICKNAWTVTCTAAFWTRLYRRHYTLDASLPLRLRPESMEKLRCLRACVIRSLYHMYEPFAARISKNPAIPESTPSTLKNSKCLLFWCRKIVGNRQEPMWEFNFKFKKQSPRLKSKCTGGLQPPVQYEDVHTNPDQDCCLLQVTTLNFIFIPIVMGMIFTLFTINVSTDMRHHRVRLVFQDSPVHGGRKLRSEQGVQVILDPVHSVRLFDWWHPQYPFSLRA.

Disordered stretches follow at residues methionine 1–lysine 20 and methionine 100–glycine 127. The chain crosses the membrane as a helical span at residues leucine 300–valine 320.

Belongs to the TMEM183 family.

The protein resides in the membrane. This is Transmembrane protein 183A (TMEM183A) from Homo sapiens (Human).